We begin with the raw amino-acid sequence, 177 residues long: Dual-action ribosomal maturation protein DarP (177 aa).

This sequence belongs to the DarP family.

The protein localises to the cytoplasm. Member of a network of 50S ribosomal subunit biogenesis factors which assembles along the 30S-50S interface, preventing incorrect 23S rRNA structures from forming. Promotes peptidyl transferase center (PTC) maturation. This Glaesserella parasuis serovar 5 (strain SH0165) (Haemophilus parasuis) protein is Dual-action ribosomal maturation protein DarP.